The sequence spans 454 residues: MAHDILIVDDEPDISGLVAGILEDEGYSARTARDADGALAEIAARRPNLIFLDIWLQGSRLDGLELLDIIKREHPEVPVVMISGHGNIETAVAAIKRGAYDFIEKPFNADRLVVITERALETLRLRREVRELKQLTQPHTMVGRSSVIQQLRATVDRVGPTNSRILIVGPSGSGKELTARMIHAASARAQGPFVVINAAAITPERLEYELFGVEEGEGRERHRGALEEAHGGTLFLDEIADMPRETQNRVLRVLVEQTFSRIGSSEKVRVDVRIISSTGRHLEEEIAAGRFREDLYHRLSVVPIRVPPLAERREDIPDLVDFFIDLISQTTGLQRRKVGEDAMAVLQSHDWPGNVRQLRNNVERLLILAGGDPDAEVTASMLPPDVGALVPTLPNGNGGEHLMGLPLREAREVFEREYLAAQINRFGGNISRTAEFVGMERSALHRKLKALGVG.

Residues 4 to 120 (DILIVDDEPD…RLVVITERAL (117 aa)) enclose the Response regulatory domain. Position 53 is a 4-aspartylphosphate (D53). The 227-residue stretch at 141–367 (MVGRSSVIQQ…LRNNVERLLI (227 aa)) folds into the Sigma-54 factor interaction domain. ATP is bound by residues 169–176 (GPSGSGKE) and 229–238 (AHGGTLFLDE). Positions 430 to 449 (ISRTAEFVGMERSALHRKLK) form a DNA-binding region, H-T-H motif.

Member of the two-component regulatory system NtrY/NtrX involved in the activation of nitrogen assimilatory genes such as GlnA. NtrX is probably phosphorylated by NtrY and interacts with sigma-54. This chain is Nitrogen assimilation regulatory protein NtrX (ntrX), found in Azorhizobium caulinodans (strain ATCC 43989 / DSM 5975 / JCM 20966 / LMG 6465 / NBRC 14845 / NCIMB 13405 / ORS 571).